The following is a 544-amino-acid chain: Calcium-dependent protein kinase 6 (544 aa).

Positions 1 to 47 are disordered; the sequence is MGNSCRGSFKDKIYEGNHSRPEENSKSTTTTVSSVHSPTTDQDFSKQ. Glycine 2 carries N-myristoyl glycine lipidation. A compositionally biased stretch (basic and acidic residues) spans 8 to 25; that stretch reads SFKDKIYEGNHSRPEENS. A compositionally biased stretch (low complexity) spans 26–40; it reads KSTTTTVSSVHSPTT. One can recognise a Protein kinase domain in the interval 85–343; the sequence is YTLSRKLGQG…AHEVLRHPWI (259 aa). ATP is bound by residues 91–99 and lysine 114; that span reads LGQGQFGTT. Aspartate 209 functions as the Proton acceptor in the catalytic mechanism. Residue serine 249 is modified to Phosphoserine. The interval 349–379 is autoinhibitory domain; sequence APDRALDPAVLSRLKQFSAMNKLKKMALKVI. EF-hand domains follow at residues 386–421, 422–457, 458–493, and 497–527; these read EEIA…YGST, LKDT…LNKL, EREE…HGMT, and LEDI…GNAG. Residues aspartate 399, aspartate 401, serine 403, glutamate 410, aspartate 435, aspartate 437, serine 439, threonine 441, glutamate 446, aspartate 471, aspartate 473, serine 475, tyrosine 477, glutamate 482, aspartate 505, aspartate 507, aspartate 509, arginine 511, and glutamate 516 each coordinate Ca(2+).

This sequence belongs to the protein kinase superfamily. Ser/Thr protein kinase family. CDPK subfamily. Interacts with SLAC1. Interacts with FD. As to expression, expressed in both guard cells and mesophyll cells. Expressed in the shoot apical meristem.

Its subcellular location is the cell membrane. The protein localises to the nucleus. The enzyme catalyses L-seryl-[protein] + ATP = O-phospho-L-seryl-[protein] + ADP + H(+). It catalyses the reaction L-threonyl-[protein] + ATP = O-phospho-L-threonyl-[protein] + ADP + H(+). Its activity is regulated as follows. Activated by calcium. Autophosphorylation may play an important role in the regulation of the kinase activity. May play a role in signal transduction pathways that involve calcium as a second messenger. Functions in abscisic acid (ABA) regulation of guard cell S-type anion- and Ca(2+)-permeable channels and stomatal closure. Phosphorylates FD. The protein is Calcium-dependent protein kinase 6 (CPK6) of Arabidopsis thaliana (Mouse-ear cress).